The primary structure comprises 151 residues: Centrin-A (151 aa).

2 consecutive EF-hand domains span residues 80-115 and 116-151; these read DVYASFEQAFSLFDRDGSGYITFDDLKTVAINLGEA and RSDSKLYNMIKRADLNGDKKISKIEFIQLLYWKKIY. Ca(2+) is bound by residues aspartate 93, aspartate 95, serine 97, tyrosine 99, aspartate 104, aspartate 129, asparagine 131, aspartate 133, lysine 135, and glutamate 140.

The protein belongs to the centrin family.

It is found in the cytoplasm. The protein resides in the cytoskeleton. It localises to the microtubule organizing center. Its subcellular location is the centrosome. The protein localises to the nucleus. Functionally, plays a fundamental role in microtubule-organizing center structure and function. This chain is Centrin-A (cenA), found in Dictyostelium discoideum (Social amoeba).